A 491-amino-acid chain; its full sequence is Ribonuclease G (491 aa).

An S1 motif domain is found at 40–129; that stretch reads GNIYKGRVTR…LTTDITLPSR (90 aa). Residues aspartate 305 and aspartate 348 each coordinate Mg(2+).

Belongs to the RNase E/G family. RNase G subfamily. Homodimer, in equilibrium with possible higher multimers. Mg(2+) serves as cofactor.

The protein resides in the cytoplasm. Its function is as follows. An endonuclease that acts in the processing of the 5'-end of 16S rRNA and 23S rRNA. It prefers 5'-monophosphorylated substrates and cleaves single-stranded sites rich in A and U residues; contributes to tRNA processing and mRNA turnover. The protein is Ribonuclease G (rng) of Haemophilus influenzae (strain ATCC 51907 / DSM 11121 / KW20 / Rd).